The chain runs to 402 residues: Multidrug resistance protein MdtH (402 aa).

At 1–12 (MSRVSQARNLGK) the chain is on the cytoplasmic side. Residues 13-33 (YFLLIDNMLVVLGFFVVFPLI) traverse the membrane as a helical segment. Residues 34 to 98 (SIRFVDQMGW…GFATMGIAHE (65 aa)) are Periplasmic-facing. Residues 99–116 (PWLLWFSCFLSGLGGTLF) traverse the membrane as a helical segment. Residues 117 to 138 (DPPRSALVVKLIRPEQRGRFFS) lie on the Cytoplasmic side of the membrane. A helical membrane pass occupies residues 139-159 (LLMMQDSAGAVIGALLGSWLL). Residues 160–164 (QYDFR) are Periplasmic-facing. Residues 165 to 185 (LVCATGAILFILCALFNAWLL) form a helical membrane-spanning segment. Residues 186–213 (PAWKLSTVRTPVREGMRRVMSDKRFVTY) lie on the Cytoplasmic side of the membrane. Residues 214 to 234 (VLTLAGYYMLAVQVMLMLPIM) form a helical membrane-spanning segment. Residues 235-243 (VNDIAGSPA) lie on the Periplasmic side of the membrane. A helical membrane pass occupies residues 244-264 (AVKWMYAIEACLSLTLLYPIA). The Cytoplasmic segment spans residues 265 to 276 (RWSEKRFRLEHR). A helical transmembrane segment spans residues 277-297 (LMAGLLVMSLSMIPIGMVGNL). The Periplasmic segment spans residues 298 to 299 (QQ). A helical membrane pass occupies residues 300-320 (LFTLICAFYIGSVIAEPARET). Over 321–339 (LSASLADARARGSYMGFSR) the chain is Cytoplasmic. Residues 340–360 (LGLAIGGAIGYIGGGWLFDMG) form a helical membrane-spanning segment. The Periplasmic segment spans residues 361 to 367 (KALTQPE). A helical membrane pass occupies residues 368-388 (LPWMMLGIIGFITFLALGWQF). The Cytoplasmic portion of the chain corresponds to 389-402 (SHKRTPRRMLEPGA).

The protein belongs to the major facilitator superfamily. DHA1 family. MdtH (TC 2.A.1.2.21) subfamily.

It localises to the cell inner membrane. This is Multidrug resistance protein MdtH from Salmonella paratyphi B (strain ATCC BAA-1250 / SPB7).